The chain runs to 128 residues: Large ribosomal subunit protein bL12 (128 aa).

This sequence belongs to the bacterial ribosomal protein bL12 family. Homodimer. Part of the ribosomal stalk of the 50S ribosomal subunit. Forms a multimeric L10(L12)X complex, where L10 forms an elongated spine to which 2 to 4 L12 dimers bind in a sequential fashion. Binds GTP-bound translation factors.

Forms part of the ribosomal stalk which helps the ribosome interact with GTP-bound translation factors. Is thus essential for accurate translation. The protein is Large ribosomal subunit protein bL12 of Kosmotoga olearia (strain ATCC BAA-1733 / DSM 21960 / TBF 19.5.1).